An 87-amino-acid chain; its full sequence is Defensin-like protein 175 (87 aa).

The signal sequence occupies residues Met1–Gln23. Cystine bridges form between Cys27-Cys66, Cys36-Cys55, Cys39-Cys60, and Cys43-Cys62.

Belongs to the DEFL family.

Its subcellular location is the secreted. The sequence is that of Defensin-like protein 175 from Arabidopsis thaliana (Mouse-ear cress).